Reading from the N-terminus, the 142-residue chain is Large ribosomal subunit protein uL13 (142 aa).

It belongs to the universal ribosomal protein uL13 family. Part of the 50S ribosomal subunit.

This protein is one of the early assembly proteins of the 50S ribosomal subunit, although it is not seen to bind rRNA by itself. It is important during the early stages of 50S assembly. The sequence is that of Large ribosomal subunit protein uL13 from Bordetella petrii (strain ATCC BAA-461 / DSM 12804 / CCUG 43448).